Reading from the N-terminus, the 201-residue chain is Natural cytotoxicity triggering receptor 3 (201 aa).

Residues 1-18 (MAWMLLLILIMVHPGSCA) form the signal peptide. Residues 19–126 (LWVSQPPEIR…VGTGNGTRLV (108 aa)) enclose the Ig-like domain. Topologically, residues 19 to 135 (LWVSQPPEIR…VVEKEHPQLG (117 aa)) are extracellular. Cys-39 and Cys-108 form a disulfide bridge. 2 N-linked (GlcNAc...) asparagine glycosylation sites follow: Asn-42 and Asn-121. The helical transmembrane segment at 136 to 156 (AGTVLLLRAGFYAVSFLSVAV) threads the bilayer. The Cytoplasmic portion of the chain corresponds to 157–201 (GSTVYYQGKCLTWKGPRRQLPAVVPAPLPPPCGSSAHLLPPVPGG).

It belongs to the natural cytotoxicity receptor (NCR) family. Homodimer in the unliganted form. Interacts with CD3Z. Interacts with and is activated by binding to NCR3LG1. Interacts with and is activated by binding to BAG6. Interacts with and is inhibited by binding to LGALS3. Selectively expressed by all resting and activated NK cells and weakly expressed in spleen.

It is found in the cell membrane. Cell membrane receptor of natural killer/NK cells that is activated by binding of extracellular ligands including BAG6 and NCR3LG1. Stimulates NK cells cytotoxicity toward neighboring cells producing these ligands. It controls, for instance, NK cells cytotoxicity against tumor cells. Engagement of NCR3 by BAG6 also promotes myeloid dendritic cells (DC) maturation, both through killing DCs that did not acquire a mature phenotype, and inducing the release by NK cells of TNFA and IFNG which promote DC maturation. The protein is Natural cytotoxicity triggering receptor 3 of Homo sapiens (Human).